The following is a 365-amino-acid chain: MAKDYYKILGVDRNASEEDIKKAFRELAKKWHPDLHPDNKAEAEEKFKEISEAYEVLSDPEKRRIYDQTGSVDFGGGGSNFNWDNFTHFSDINDIFNEIFGGNFGSDFFSGFGNRQSTRNIDLDMYTNLDISLEEAYYGTEKRIKFRRNAICPDCKGTGAKNGKLITCPTCHGTGQQRVVRGQGFFRMVTVTTCNTCGGKGRIPEEKCPRCNGTGTIVVDEDITVKIPRGATDNLRLRVSGKGQSYDGRTGDLYVILRIKQDKNLQRINDDLLLDQKINFGQAALGADIPIQIFNEKYNLKIPEGTQPGDVIKIKGAGMPHLNGHGSGDLLVRINVEVPKRLTAKQRELIRELFDIKENHKSWFH.

One can recognise a J domain in the interval 4-70 (DYYKILGVDR…EKRRIYDQTG (67 aa)). A CR-type zinc finger spans residues 139-220 (GTEKRIKFRR…CNGTGTIVVD (82 aa)). 8 residues coordinate Zn(2+): cysteine 152, cysteine 155, cysteine 168, cysteine 171, cysteine 194, cysteine 197, cysteine 208, and cysteine 211. CXXCXGXG motif repeat units follow at residues 152–159 (CPDCKGTG), 168–175 (CPTCHGTG), 194–201 (CNTCGGKG), and 208–215 (CPRCNGTG).

It belongs to the DnaJ family. As to quaternary structure, homodimer. Requires Zn(2+) as cofactor.

It localises to the cytoplasm. Its function is as follows. Participates actively in the response to hyperosmotic and heat shock by preventing the aggregation of stress-denatured proteins and by disaggregating proteins, also in an autonomous, DnaK-independent fashion. Unfolded proteins bind initially to DnaJ; upon interaction with the DnaJ-bound protein, DnaK hydrolyzes its bound ATP, resulting in the formation of a stable complex. GrpE releases ADP from DnaK; ATP binding to DnaK triggers the release of the substrate protein, thus completing the reaction cycle. Several rounds of ATP-dependent interactions between DnaJ, DnaK and GrpE are required for fully efficient folding. Also involved, together with DnaK and GrpE, in the DNA replication of plasmids through activation of initiation proteins. This Thermoplasma volcanium (strain ATCC 51530 / DSM 4299 / JCM 9571 / NBRC 15438 / GSS1) protein is Chaperone protein DnaJ.